Reading from the N-terminus, the 580-residue chain is Membrane protein insertase YidC (580 aa).

The next 6 helical transmembrane spans lie at 5–25 (SVTG…FMSP), 259–279 (KYFV…LDGS), 362–382 (GLII…LSLA), 427–447 (LGGC…FYVF), 477–497 (IPMY…TVFV), and 513–533 (IMLY…PSGL).

The protein belongs to the OXA1/ALB3/YidC family. Type 1 subfamily. In terms of assembly, interacts with the Sec translocase complex via SecD. Specifically interacts with transmembrane segments of nascent integral membrane proteins during membrane integration.

Its subcellular location is the cell inner membrane. Functionally, required for the insertion and/or proper folding and/or complex formation of integral membrane proteins into the membrane. Involved in integration of membrane proteins that insert both dependently and independently of the Sec translocase complex, as well as at least some lipoproteins. Aids folding of multispanning membrane proteins. This Chlorobium phaeovibrioides (strain DSM 265 / 1930) (Prosthecochloris vibrioformis (strain DSM 265)) protein is Membrane protein insertase YidC.